Here is a 377-residue protein sequence, read N- to C-terminus: Spermidine/putrescine import ATP-binding protein PotA (377 aa).

Residues 18–248 enclose the ABC transporter domain; that stretch reads IRLSGISKSF…PKNLFVARFI (231 aa). 50-57 contacts ATP; the sequence is GPSGCGKT.

Belongs to the ABC transporter superfamily. Spermidine/putrescine importer (TC 3.A.1.11.1) family. As to quaternary structure, the complex is composed of two ATP-binding proteins (PotA), two transmembrane proteins (PotB and PotC) and a solute-binding protein (PotD).

Its subcellular location is the cell inner membrane. The enzyme catalyses ATP + H2O + polyamine-[polyamine-binding protein]Side 1 = ADP + phosphate + polyamineSide 2 + [polyamine-binding protein]Side 1.. Its function is as follows. Part of the ABC transporter complex PotABCD involved in spermidine/putrescine import. Responsible for energy coupling to the transport system. The protein is Spermidine/putrescine import ATP-binding protein PotA of Vibrio cholerae serotype O1 (strain ATCC 39315 / El Tor Inaba N16961).